Reading from the N-terminus, the 162-residue chain is UPF0114 protein Pput_0713 (162 aa).

Helical transmembrane passes span 15-35, 53-73, 109-126, and 136-156; these read LLAP…LKFF, LILV…LVMV, VAAS…RVFM, and LMWY…MGYL.

This sequence belongs to the UPF0114 family.

It localises to the cell membrane. This is UPF0114 protein Pput_0713 from Pseudomonas putida (strain ATCC 700007 / DSM 6899 / JCM 31910 / BCRC 17059 / LMG 24140 / F1).